Here is a 334-residue protein sequence, read N- to C-terminus: L-lactate dehydrogenase B chain (334 aa).

An N-acetylalanine modification is found at Ala2. Lys7 carries the N6-acetyllysine modification. NAD(+) is bound at residue 31–53 (QVGMACAISILGKSLADELALVD). Ser44 is modified (phosphoserine). Lys58 is modified (N6-acetyllysine). Arg100 contacts NAD(+). Arg107 lines the substrate pocket. Residue Lys119 is modified to N6-acetyllysine. Residue Asn139 participates in NAD(+) binding. Substrate contacts are provided by Asn139 and Arg170. His194 functions as the Proton acceptor in the catalytic mechanism. Position 240 is a phosphotyrosine (Tyr240). Substrate is bound at residue Thr249. Lys329 carries the N6-acetyllysine modification.

Belongs to the LDH/MDH superfamily. LDH family. As to quaternary structure, homotetramer. Interacts with PTEN upstream reading frame protein MP31; the interaction leads to inhibition of mitochondrial lactate dehydrogenase activity, preventing conversion of lactate to pyruvate in mitochondria. As to expression, predominantly expressed in aerobic tissues such as cardiac muscle.

Its subcellular location is the cytoplasm. It localises to the mitochondrion inner membrane. The catalysed reaction is (S)-lactate + NAD(+) = pyruvate + NADH + H(+). Its pathway is fermentation; pyruvate fermentation to lactate; (S)-lactate from pyruvate: step 1/1. Functionally, interconverts simultaneously and stereospecifically pyruvate and lactate with concomitant interconversion of NADH and NAD(+). This chain is L-lactate dehydrogenase B chain (LDHB), found in Homo sapiens (Human).